The following is a 600-amino-acid chain: MAIRQLSETLINQIAAGEVIERPASAAKELIENALDAGATRIEIATAGGGKALLRVSDNGSGMDAADLELAVRRHCTSKLSETLEDIRTLGFRGEALPSIGSVARLSIASRRRDSAGGHEIAVNAGKVAHLRPAAANPGTIVEVRDLFFATPARLKFLKTEKAEAGAITEIVKRMAIAFPAVRFVLSGSDRTTLEFPATGDDHLARMAQVLGKDFRDNAIALDAVREEISLTGFAGVPTFNRGNSAHQYAFVNGRPVQDKLILSAIRGAYAETIPSGRHPVAVLSITLDPALVDVNVHPAKSDVRFRDPGLVRGLIVGAIREALARDGSRAATTGASDMLRSFRPGFQPQAQRPQTAWSAETSPFRPYQPTTGFSERPQASFDGLSMPTARAEPPFSPQPAAADTTARYPLGAARAQIHANYIVAQTEDGLVIVDQHAAHERLVFEAMRKALHSKRLASQVLLIPEIVDIPEEDCDRLMQHAAELAELGLAIERFGPGAIAVRETPAMLGEVDAHGLIRQLADEIAEWDTASGLSAKLEYVAATMACHGSVRSGRRLRPEEMNALLREMEVTPGSGQCNHGRPTYIELKLSDIERLFGRS.

Residues 348 to 375 (QPQAQRPQTAWSAETSPFRPYQPTTGFS) form a disordered region. Over residues 349-362 (PQAQRPQTAWSAET) the composition is skewed to polar residues.

Belongs to the DNA mismatch repair MutL/HexB family.

In terms of biological role, this protein is involved in the repair of mismatches in DNA. It is required for dam-dependent methyl-directed DNA mismatch repair. May act as a 'molecular matchmaker', a protein that promotes the formation of a stable complex between two or more DNA-binding proteins in an ATP-dependent manner without itself being part of a final effector complex. The chain is DNA mismatch repair protein MutL from Rhizobium leguminosarum bv. trifolii (strain WSM2304).